Consider the following 317-residue polypeptide: Melanocyte-stimulating hormone receptor (317 aa).

Topologically, residues 1-37 (MSVQGPQRRLLGSLNSTSPAAPRLGLAANQTGPRCLE) are extracellular. 2 N-linked (GlcNAc...) asparagine glycosylation sites follow: Asn15 and Asn29. Residues 38–63 (VSVPDGLFLSLGLVSVVENVLVVAAI) form a helical membrane-spanning segment. The Cytoplasmic segment spans residues 64–72 (AKNRNLHSP). The chain crosses the membrane as a helical span at residues 73–93 (MYYFICCLAVSDLLVSVSSVL). The Extracellular portion of the chain corresponds to 94–118 (ETAVMLLLEAGTLAGRAAVVQQLDD). The helical transmembrane segment at 119–140 (VIDVLVCGAMVSSLCFLGAIAV) threads the bilayer. Over 141-163 (DRYISIFYALRYHSIVTLPRAWR) the chain is Cytoplasmic. A helical membrane pass occupies residues 164–183 (AISAIWVASVLSSTLFIAYY). The Extracellular portion of the chain corresponds to 184 to 191 (DHTAVLLC). Residues 192–211 (LVSFFVAMLVLMAVLYVHML) traverse the membrane as a helical segment. Residues 212 to 240 (ARACQHARGIARLHKRQRPVHQGLGLKGA) are Cytoplasmic-facing. A helical transmembrane segment spans residues 241–266 (ATLTILLGIFFLCWGPFFLHLSLMVL). Residues 267-279 (CPRHPICGCVFKN) lie on the Extracellular side of the membrane. Residues 280-300 (FNLFLTLIICNSIVDPLIYAF) form a helical membrane-spanning segment. The Cytoplasmic portion of the chain corresponds to 301–317 (RSQELRKTLQEVLLCSW). Cys315 carries the S-palmitoyl cysteine lipid modification.

The protein belongs to the G-protein coupled receptor 1 family. In terms of assembly, interacts with MGRN1, but does not undergo MGRN1-mediated ubiquitination; this interaction competes with GNAS-binding and thus inhibits agonist-induced cAMP production. Interacts with OPN3; the interaction results in a decrease in MC1R-mediated cAMP signaling and ultimately a decrease in melanin production in melanocytes.

Its subcellular location is the cell membrane. Its function is as follows. Receptor for MSH (alpha, beta and gamma) and ACTH. The activity of this receptor is mediated by G proteins which activate adenylate cyclase. Mediates melanogenesis, the production of eumelanin (black/brown) and phaeomelanin (red/yellow), via regulation of cAMP signaling in melanocytes. This chain is Melanocyte-stimulating hormone receptor (MC1R), found in Panthera onca (Jaguar).